Here is a 246-residue protein sequence, read N- to C-terminus: Bidirectional sugar transporter SWEET3a (246 aa).

Residues 1-6 (MFPDIR) are Extracellular-facing. Residues 7–27 (FIVGIIGSVACMLLYSAPILT) form a helical membrane-spanning segment. The MtN3/slv 1 domain occupies 7 to 96 (FIVGIIGSVA…ISIYVWFAPR (90 aa)). At 28 to 42 (FKRVIKKASVEEFSC) the chain is on the cytoplasmic side. Residues 43 to 63 (IPYILALFSCLTYSWYGFPVV) form a helical membrane-spanning segment. Residues 64-74 (SYGWENMTVCS) lie on the Extracellular side of the membrane. A glycan (N-linked (GlcNAc...) asparagine) is linked at N69. Residues 75–95 (ISSLGVLFEGTFISIYVWFAP) traverse the membrane as a helical segment. The Cytoplasmic segment spans residues 96–101 (RGKKKQ). A helical membrane pass occupies residues 102–122 (VMLMASLILAVFCMTVFFSSF). Residues 123–131 (SIHNHHIRK) lie on the Extracellular side of the membrane. Residues 132 to 152 (VFVGSVGLVSSISMYGSPLVA) form a helical membrane-spanning segment. One can recognise a MtN3/slv 2 domain in the interval 133 to 217 (FVGSVGLVSS…VVYCIYSKCK (85 aa)). Residues 153-166 (MKQVIRTKSVEFMP) are Cytoplasmic-facing. A helical membrane pass occupies residues 167–187 (FYLSLFTLFTSLTWMAYGVIG). Topologically, residues 188–191 (RDPF) are extracellular. The chain crosses the membrane as a helical span at residues 192–212 (IATPNCIGSIMGILQLVVYCI). Residues 213-246 (YSKCKEAPKVLHDIEQANVVKIPTSHVDTKGHNP) lie on the Cytoplasmic side of the membrane.

It belongs to the SWEET sugar transporter family. Forms homooligomers and/or heterooligomers.

Its subcellular location is the cell membrane. Mediates both low-affinity uptake and efflux of sugar across the plasma membrane. This is Bidirectional sugar transporter SWEET3a (SWEET3A) from Oryza sativa subsp. japonica (Rice).